The following is a 448-amino-acid chain: Bifunctional F420 biosynthesis protein FbiB (448 aa).

The tract at residues 1-244 (MTGPEHGSAS…PGANDLFWLG (244 aa)) is coenzyme F420:L-glutamate ligase. Residues 20-23 (LPEF), Ser50, and Lys55 each bind GTP. Asp109 contacts a divalent metal cation. Asn112 is a binding site for GTP. Residues Asp150 and Thr151 each contribute to the a divalent metal cation site. The interval 245–448 (TAEALELGRQ…VPAADLLILK (204 aa)) is dehydro-coenzyme F420-0 reductase. FMN is bound by residues 260 to 264 (RRSVR) and Ala288. Asp320 contacts coenzyme F420-(gamma-Glu)n. Residues Gly399 and Arg436 each coordinate FMN.

The protein in the N-terminal section; belongs to the CofE family. Mg(2+) is required as a cofactor. It depends on Mn(2+) as a cofactor. Requires K(+) as cofactor.

It carries out the reaction oxidized coenzyme F420-0 + GTP + L-glutamate = oxidized coenzyme F420-1 + GDP + phosphate + H(+). The catalysed reaction is oxidized coenzyme F420-1 + GTP + L-glutamate = oxidized coenzyme F420-2 + GDP + phosphate + H(+). It catalyses the reaction oxidized coenzyme F420-(gamma-L-Glu)(n) + GTP + L-glutamate = oxidized coenzyme F420-(gamma-L-Glu)(n+1) + GDP + phosphate + H(+). The enzyme catalyses oxidized coenzyme F420-0 + FMN + H(+) = dehydro coenzyme F420-0 + FMNH2. It functions in the pathway cofactor biosynthesis; coenzyme F420 biosynthesis. Its function is as follows. Bifunctional enzyme that catalyzes the GTP-dependent successive addition of multiple gamma-linked L-glutamates to the L-lactyl phosphodiester of 7,8-didemethyl-8-hydroxy-5-deazariboflavin (F420-0) to form polyglutamated F420 derivatives, and the FMNH2-dependent reduction of dehydro-F420-0 to form F420-0. The chain is Bifunctional F420 biosynthesis protein FbiB from Mycobacterium tuberculosis (strain ATCC 25177 / H37Ra).